Here is a 120-residue protein sequence, read N- to C-terminus: Large ribosomal subunit protein uL18 (120 aa).

This sequence belongs to the universal ribosomal protein uL18 family. Part of the 50S ribosomal subunit; part of the 5S rRNA/L5/L18/L25 subcomplex. Contacts the 5S and 23S rRNAs.

This is one of the proteins that bind and probably mediate the attachment of the 5S RNA into the large ribosomal subunit, where it forms part of the central protuberance. In Treponema denticola (strain ATCC 35405 / DSM 14222 / CIP 103919 / JCM 8153 / KCTC 15104), this protein is Large ribosomal subunit protein uL18.